The following is a 516-amino-acid chain: NAD(P)H-quinone oxidoreductase chain 4, chloroplastic (516 aa).

14 consecutive transmembrane segments (helical) span residues 4 to 24 (FPWL…IFLL), 37 to 57 (LCIC…HFQL), 87 to 107 (IGPI…AWPV), 111 to 131 (AQLF…SFSS), 134 to 154 (LLLF…LLSM), 167 to 187 (FILY…GIGL), 208 to 228 (ALEV…LPII), 242 to 262 (HYST…YGLV), 272 to 292 (AHCL…IYAA), 305 to 325 (IAYS…SLSD), 330 to 350 (GAIL…FLAG), 386 to 406 (LALP…GIIT), 416 to 436 (ILIA…SLSM), and 462 to 482 (LFVS…PDFV).

It belongs to the complex I subunit 4 family.

It is found in the plastid. The protein resides in the chloroplast thylakoid membrane. The enzyme catalyses a plastoquinone + NADH + (n+1) H(+)(in) = a plastoquinol + NAD(+) + n H(+)(out). It carries out the reaction a plastoquinone + NADPH + (n+1) H(+)(in) = a plastoquinol + NADP(+) + n H(+)(out). The sequence is that of NAD(P)H-quinone oxidoreductase chain 4, chloroplastic from Oenothera argillicola (Appalachian evening primrose).